An 80-amino-acid polypeptide reads, in one-letter code: Small ribosomal subunit protein bS18 (80 aa).

It belongs to the bacterial ribosomal protein bS18 family. As to quaternary structure, part of the 30S ribosomal subunit. Forms a tight heterodimer with protein bS6.

Functionally, binds as a heterodimer with protein bS6 to the central domain of the 16S rRNA, where it helps stabilize the platform of the 30S subunit. The polypeptide is Small ribosomal subunit protein bS18 (Beijerinckia indica subsp. indica (strain ATCC 9039 / DSM 1715 / NCIMB 8712)).